Reading from the N-terminus, the 275-residue chain is Formamidopyrimidine-DNA glycosylase (275 aa).

The active-site Schiff-base intermediate with DNA is the Pro2. Glu3 serves as the catalytic Proton donor. Lys58 acts as the Proton donor; for beta-elimination activity in catalysis. The DNA site is built by His91 and Arg110. An FPG-type zinc finger spans residues 238–272; sequence QVYGQTGKPCPRCGQAIVKLKVGGRGTHICPKCQK. The active-site Proton donor; for delta-elimination activity is Arg262.

This sequence belongs to the FPG family. Monomer. Zn(2+) is required as a cofactor.

The catalysed reaction is Hydrolysis of DNA containing ring-opened 7-methylguanine residues, releasing 2,6-diamino-4-hydroxy-5-(N-methyl)formamidopyrimidine.. It carries out the reaction 2'-deoxyribonucleotide-(2'-deoxyribose 5'-phosphate)-2'-deoxyribonucleotide-DNA = a 3'-end 2'-deoxyribonucleotide-(2,3-dehydro-2,3-deoxyribose 5'-phosphate)-DNA + a 5'-end 5'-phospho-2'-deoxyribonucleoside-DNA + H(+). In terms of biological role, involved in base excision repair of DNA damaged by oxidation or by mutagenic agents. Acts as a DNA glycosylase that recognizes and removes damaged bases. Has a preference for oxidized purines, such as 7,8-dihydro-8-oxoguanine (8-oxoG). Has AP (apurinic/apyrimidinic) lyase activity and introduces nicks in the DNA strand. Cleaves the DNA backbone by beta-delta elimination to generate a single-strand break at the site of the removed base with both 3'- and 5'-phosphates. This is Formamidopyrimidine-DNA glycosylase from Streptococcus pyogenes serotype M18 (strain MGAS8232).